Consider the following 1052-residue polypeptide: SWI/SNF-related matrix-associated actin-dependent regulator of chromatin subfamily A member 5 (1052 aa).

A compositionally biased stretch (pro residues) spans 1 to 15 (MSSAAEPPPPPPPES). The interval 1-83 (MSSAAEPPPP…QEPDPTYEEK (83 aa)) is disordered. Residue Ser2 is modified to N-acetylserine. Residues 16 to 55 (APSKPAASIASGGSNSSNKGGPEGVAAQAVASAASAGPAD) are compositionally biased toward low complexity. The residue at position 66 (Ser66) is a Phosphoserine. The segment covering 69 to 83 (KQKEIQEPDPTYEEK) has biased composition (basic and acidic residues). Lys83 is covalently cross-linked (Glycyl lysine isopeptide (Lys-Gly) (interchain with G-Cter in SUMO2)). Thr113 carries the post-translational modification Phosphothreonine. Phosphoserine is present on residues Ser116, Ser137, and Ser171. A Helicase ATP-binding domain is found at 192-357 (ISLYENGING…WSLLNFLLPD (166 aa)). 205–212 (DEMGLGKT) contributes to the ATP binding site. Residues 308-311 (DEAH) carry the DEAH box motif. Lys440 carries the post-translational modification N6-acetyllysine. One can recognise a Helicase C-terminal domain in the interval 487-638 (VLDKLLPKLK…SIVIQQGRLV (152 aa)). Residues Lys644, Lys647, Lys694, Lys722, and Lys735 each participate in a glycyl lysine isopeptide (Lys-Gly) (interchain with G-Cter in SUMO2) cross-link. 2 positions are modified to phosphoserine: Ser755 and Ser825. 2 consecutive SANT domains span residues 840–892 (QGFT…ERCN) and 943–1007 (KGKN…LITL). Lys966 participates in a covalent cross-link: Glycyl lysine isopeptide (Lys-Gly) (interchain with G-Cter in SUMO2). The tract at residues 1015–1052 (LEEKEKAEKKKRGPKPSTQKRKMDGAPDGRGRKKKLKL) is disordered. Residues 1023-1034 (KKKRGPKPSTQK) show a composition bias toward basic residues. Residues 1035-1044 (RKMDGAPDGR) show a composition bias toward basic and acidic residues.

Belongs to the SNF2/RAD54 helicase family. ISWI subfamily. In terms of assembly, component of the ACF-5 ISWI chromatin-remodeling complex (also called the ACF/WCRF complex) at least composed of SMARCA5/SNF2H and BAZ1A/ACF1, which regulates the spacing of histone octamers on the DNA template to facilitate access to DNA. Within the complex interacts with BAZ1A/ACF1; the interaction is direct and is required to slide nucleosomes from end to center positions on a DNA template in an ATP-dependent manner. Component of the CHRAC ISWI chromatin-remodeling complex at least composed of SMARCA5/SNF2H, BAZ1A/ACF1, CHRAC1 and POLE3; the complex preferentially binds DNA through the CHRAC1-POLE3 heterodimer and possesses ATP-dependent nucleosome-remodeling activity. Within the complex interacts with BAZ1A/ACF1; the interaction is direct and promotes the interaction with the POLE3-CHRAC1 heterodimer. Within the complex interacts with the POLE3-CHRAC1 heterodimer; the interaction is direct and enhances nucleosome sliding activity by the SMARCA5/SNF2H and BAZ1A/ACF1 interaction. Neither POLE3 nor CHRAC1 enhances nucleosome sliding activity of the ACF-5 ISWI chromatin remodeling complex. Component of the WICH-5 ISWI chromatin-remodeling complex (also called the WICH complex) at least composed of SMARCA5/SNF2H and BAZ1B/WSTF, which regulates the spacing of histone octamers on the DNA template to facilitate access to DNA. Within the complex interacts with BAZ1B/WSTF. Component of the NoRC-5 ISWI chromatin-remodeling complex (also called the NoRC chromatin-remodeling complex) at least composed of SMARCA5/SNF2H and BAZ2A/TIP5; the complex suppresses rDNA transcription by a combination of nucleosome remodeling, histone deacetylation, and DNA methylation. Within the complex interacts with BAZ2A/TIP5. Within the complex interacts with HDAC1. Component of the BRF-5 ISWI chromatin-remodeling complex at least composed of SMARCA5/SNF2H and BAZ2B. Within the complex interacts with BAZ2B. Component of the NURF-5 ISWI chromatin-remodeling complex at least composed of SMARCA5/SNF2H and BPTF. Within the complex interacts with BPFT. Component of the CERF-5 ISWI chromatin-remodeling complex at least composed of SMARCA5/SNF2H and CECR2. LUZP1 is detected as part of the CERF-5 complex in embryonic stem cells where it is involved in complex stabilization but is not detected in the complex in the testis. Within the complex interacts with CECR2. Component of the RSF-5 ISWI chromatin-remodeling complex (also called the RSF complex) at least composed of SMARCA5/SNF2H and RSF1. Within the complex interacts with RSF1. Interacts with the cohesin complex component RAD21; the interaction is direct. Interacts with the NuRD complex components HDAC2, RBBP4 and CHD4; the interactions are direct. Interacts with PCNA. Component of the B-WICH complex, at least composed of SMARCA5/SNF2H, BAZ1B/WSTF, SF3B1, DEK, MYO1C, ERCC6, MYBBP1A and DDX21 which positively regulates RNA polymerase III transcription. Interacts with MYO1C. Interacts with BEND3. Interacts with SIRT6; promoting recruitment to DNA damage sites. (Microbial infection) Interacts with JC virus small t antigen. As to quaternary structure, (Microbial infection) Interacts with Epstein Barr virus (EBV) lytic switch protein BZLF1; this interaction participates to the activation of early lytic viral genes by BZLF1. In terms of tissue distribution, ubiquitously expressed.

Its subcellular location is the nucleus. The protein resides in the chromosome. The catalysed reaction is ATP + H2O = ADP + phosphate + H(+). Its function is as follows. ATPase that possesses intrinsic ATP-dependent nucleosome-remodeling activity. Catalytic subunit of ISWI chromatin-remodeling complexes, which form ordered nucleosome arrays on chromatin and facilitate access to DNA during DNA-templated processes such as DNA replication, transcription, and repair; this may require intact histone H4 tails. Within the ISWI chromatin-remodeling complexes, slides edge- and center-positioned histone octamers away from their original location on the DNA template. Catalytic activity and histone octamer sliding propensity is regulated and determined by components of the ISWI chromatin-remodeling complexes. The BAZ1A/ACF1-, BAZ1B/WSTF-, BAZ2A/TIP5- and BAZ2B-containing ISWI chromatin-remodeling complexes regulate the spacing of nucleosomes along the chromatin and have the ability to slide mononucleosomes to the center of a DNA template in an ATP-dependent manner. The CECR2- and RSF1-containing ISWI chromatin-remodeling complexes do not have the ability to slide mononucleosomes to the center of a DNA template. Binds to core histones together with RSF1, and is required for the assembly of regular nucleosome arrays by the RSF-5 ISWI chromatin-remodeling complex. Involved in DNA replication and together with BAZ1A/ACF1 is required for replication of pericentric heterochromatin in S-phase. Probably plays a role in repression of RNA polymerase I dependent transcription of the rDNA locus, through the recruitment of the SIN3/HDAC1 corepressor complex to the rDNA promoter. Essential component of the WICH-5 ISWI chromatin-remodeling complex (also called the WICH complex), a chromatin-remodeling complex that mobilizes nucleosomes and reconfigures irregular chromatin to a regular nucleosomal array structure. The WICH-5 ISWI chromatin-remodeling complex regulates the transcription of various genes, has a role in RNA polymerase I transcription. Within the B-WICH complex has a role in RNA polymerase III transcription. Mediates the histone H2AX phosphorylation at 'Tyr-142', and is involved in the maintenance of chromatin structures during DNA replication processes. Essential component of NoRC-5 ISWI chromatin-remodeling complex, a complex that mediates silencing of a fraction of rDNA by recruiting histone-modifying enzymes and DNA methyltransferases, leading to heterochromatin formation and transcriptional silencing. The protein is SWI/SNF-related matrix-associated actin-dependent regulator of chromatin subfamily A member 5 of Homo sapiens (Human).